The chain runs to 311 residues: Methionyl-tRNA formyltransferase (311 aa).

108-111 (SILP) is a binding site for (6S)-5,6,7,8-tetrahydrofolate.

The protein belongs to the Fmt family.

The enzyme catalyses L-methionyl-tRNA(fMet) + (6R)-10-formyltetrahydrofolate = N-formyl-L-methionyl-tRNA(fMet) + (6S)-5,6,7,8-tetrahydrofolate + H(+). In terms of biological role, attaches a formyl group to the free amino group of methionyl-tRNA(fMet). The formyl group appears to play a dual role in the initiator identity of N-formylmethionyl-tRNA by promoting its recognition by IF2 and preventing the misappropriation of this tRNA by the elongation apparatus. The protein is Methionyl-tRNA formyltransferase of Sorangium cellulosum (strain So ce56) (Polyangium cellulosum (strain So ce56)).